We begin with the raw amino-acid sequence, 201 residues long: Endoribonuclease YbeY (201 aa).

His156, His160, and His166 together coordinate Zn(2+).

It belongs to the endoribonuclease YbeY family. It depends on Zn(2+) as a cofactor.

The protein localises to the cytoplasm. Functionally, single strand-specific metallo-endoribonuclease involved in late-stage 70S ribosome quality control and in maturation of the 3' terminus of the 16S rRNA. This is Endoribonuclease YbeY from Cupriavidus pinatubonensis (strain JMP 134 / LMG 1197) (Cupriavidus necator (strain JMP 134)).